We begin with the raw amino-acid sequence, 634 residues long: 1-deoxy-D-xylulose-5-phosphate synthase (634 aa).

Thiamine diphosphate contacts are provided by residues histidine 72 and 113 to 115 (GHS). Position 144 (aspartate 144) interacts with Mg(2+). Residues 145–146 (GA), asparagine 173, tyrosine 284, and glutamate 367 contribute to the thiamine diphosphate site. Asparagine 173 lines the Mg(2+) pocket.

This sequence belongs to the transketolase family. DXPS subfamily. As to quaternary structure, homodimer. The cofactor is Mg(2+). Thiamine diphosphate is required as a cofactor.

The catalysed reaction is D-glyceraldehyde 3-phosphate + pyruvate + H(+) = 1-deoxy-D-xylulose 5-phosphate + CO2. It functions in the pathway metabolic intermediate biosynthesis; 1-deoxy-D-xylulose 5-phosphate biosynthesis; 1-deoxy-D-xylulose 5-phosphate from D-glyceraldehyde 3-phosphate and pyruvate: step 1/1. Its function is as follows. Catalyzes the acyloin condensation reaction between C atoms 2 and 3 of pyruvate and glyceraldehyde 3-phosphate to yield 1-deoxy-D-xylulose-5-phosphate (DXP). The sequence is that of 1-deoxy-D-xylulose-5-phosphate synthase from Listeria welshimeri serovar 6b (strain ATCC 35897 / DSM 20650 / CCUG 15529 / CIP 8149 / NCTC 11857 / SLCC 5334 / V8).